The primary structure comprises 402 residues: Acetate kinase (402 aa).

Asparagine 7 is a binding site for Mg(2+). Lysine 14 provides a ligand contact to ATP. Residue arginine 95 participates in substrate binding. The active-site Proton donor/acceptor is the aspartate 152. ATP is bound by residues 212-216 (HLGNG), 286-288 (DMR), and 334-338 (GIGEN). Residue glutamate 388 participates in Mg(2+) binding.

Belongs to the acetokinase family. Homodimer. Mg(2+) is required as a cofactor. The cofactor is Mn(2+).

It localises to the cytoplasm. It carries out the reaction acetate + ATP = acetyl phosphate + ADP. The protein operates within metabolic intermediate biosynthesis; acetyl-CoA biosynthesis; acetyl-CoA from acetate: step 1/2. In terms of biological role, catalyzes the formation of acetyl phosphate from acetate and ATP. Can also catalyze the reverse reaction. This is Acetate kinase from Nitratidesulfovibrio vulgaris (strain ATCC 29579 / DSM 644 / CCUG 34227 / NCIMB 8303 / VKM B-1760 / Hildenborough) (Desulfovibrio vulgaris).